Consider the following 69-residue polypeptide: uncharacterized protein (69 aa).

It localises to the mitochondrion. This is an uncharacterized protein from Marchantia polymorpha (Common liverwort).